The sequence spans 488 residues: Proline--tRNA ligase (488 aa).

The protein belongs to the class-II aminoacyl-tRNA synthetase family. ProS type 3 subfamily. Homodimer.

Its subcellular location is the cytoplasm. It carries out the reaction tRNA(Pro) + L-proline + ATP = L-prolyl-tRNA(Pro) + AMP + diphosphate. In terms of biological role, catalyzes the attachment of proline to tRNA(Pro) in a two-step reaction: proline is first activated by ATP to form Pro-AMP and then transferred to the acceptor end of tRNA(Pro). This is Proline--tRNA ligase from Pyrobaculum aerophilum (strain ATCC 51768 / DSM 7523 / JCM 9630 / CIP 104966 / NBRC 100827 / IM2).